The sequence spans 142 residues: Large ribosomal subunit protein uL13 (142 aa).

It belongs to the universal ribosomal protein uL13 family. Part of the 50S ribosomal subunit.

Functionally, this protein is one of the early assembly proteins of the 50S ribosomal subunit, although it is not seen to bind rRNA by itself. It is important during the early stages of 50S assembly. The chain is Large ribosomal subunit protein uL13 from Pseudomonas syringae pv. tomato (strain ATCC BAA-871 / DC3000).